The chain runs to 120 residues: Large ribosomal subunit protein uL18 (120 aa).

Belongs to the universal ribosomal protein uL18 family. As to quaternary structure, part of the 50S ribosomal subunit; part of the 5S rRNA/L5/L18/L25 subcomplex. Contacts the 5S and 23S rRNAs.

Its function is as follows. This is one of the proteins that bind and probably mediate the attachment of the 5S RNA into the large ribosomal subunit, where it forms part of the central protuberance. The polypeptide is Large ribosomal subunit protein uL18 (Oleidesulfovibrio alaskensis (strain ATCC BAA-1058 / DSM 17464 / G20) (Desulfovibrio alaskensis)).